We begin with the raw amino-acid sequence, 354 residues long: Rhodopsin (354 aa).

The Extracellular portion of the chain corresponds to 1-36 (MNGTEGPYFYVPMVNTTGIVRSPYEYPQYYLVSPAA). Residues N2 and N15 are each glycosylated (N-linked (GlcNAc...) asparagine). Residues 37 to 61 (YACLGAYMFFLILVGFPVNFLTLYV) traverse the membrane as a helical segment. At 62 to 73 (TIEHKKLRTPLN) the chain is on the cytoplasmic side. The chain crosses the membrane as a helical span at residues 74–96 (YILLNLAVADLFMVFGGFTTTIY). The Extracellular portion of the chain corresponds to 97–110 (TSMHGYFVLGRLGC). Cysteines 110 and 187 form a disulfide. Residues 111-133 (NLEGYFATLGGEIGLWSLVVLAV) traverse the membrane as a helical segment. Residues 134–136 (ERW) carry the 'Ionic lock' involved in activated form stabilization motif. Residues 134–152 (ERWLVVCKPISNFRFTENH) lie on the Cytoplasmic side of the membrane. Residues 153–173 (AIMGLVFTWIMANACAAPPLL) form a helical membrane-spanning segment. At 174 to 202 (GWSRYIPEGMQCSCGVDYYTRAEGFNNES) the chain is on the extracellular side. Residues 203 to 224 (FVIYMFICHFCIPLVVVFFCYG) traverse the membrane as a helical segment. Residues 225-252 (RLLCAVKEAAAAQQESETTQRAEREVTR) are Cytoplasmic-facing. A helical membrane pass occupies residues 253 to 274 (MVVILVIGFLVCWTPYASVAWY). The Extracellular segment spans residues 275–286 (IFSNQGSEFGPL). A helical membrane pass occupies residues 287–308 (FMTIPAFFAKSSSIYNPMIYIC). K296 is modified (N6-(retinylidene)lysine). Residues 309–354 (MNKQFRHCMITTLCCGKNPFEEEEGASTTASKTEASSVSSSSVSPA) lie on the Cytoplasmic side of the membrane. 2 S-palmitoyl cysteine lipidation sites follow: C322 and C323. The interval 333–354 (GASTTASKTEASSVSSSSVSPA) is disordered. Positions 334–354 (ASTTASKTEASSVSSSSVSPA) are enriched in low complexity.

Belongs to the G-protein coupled receptor 1 family. Opsin subfamily. In terms of processing, phosphorylated on some or all of the serine and threonine residues present in the C-terminal region. Post-translationally, contains one covalently linked retinal chromophore.

It is found in the membrane. The protein resides in the cell projection. It localises to the cilium. Its subcellular location is the photoreceptor outer segment. Photoreceptor required for image-forming vision at low light intensity. While most salt water fish species use retinal as chromophore, most freshwater fish use 3-dehydroretinal, or a mixture of retinal and 3-dehydroretinal. Light-induced isomerization of 11-cis to all-trans retinal triggers a conformational change that activates signaling via G-proteins. Subsequent receptor phosphorylation mediates displacement of the bound G-protein alpha subunit by arrestin and terminates signaling. The protein is Rhodopsin (rho) of Gambusia affinis (Western mosquitofish).